The chain runs to 813 residues: Calpain-7 (813 aa).

The residue at position 1 (Met-1) is an N-acetylmethionine. At Thr-95 the chain carries Phosphothreonine. A Calpain catalytic domain is found at 232 to 540 (RERFAYPMPF…YDVIYLSWNP (309 aa)). Active-site residues include Cys-290, His-458, and Asn-478. Positions 541–701 (GLLKESTCIH…INGKWSGQSA (161 aa)) are domain III. The domain N stretch occupies residues 702–813 (GGCGNFQETH…VIPIKTTQLQ (112 aa)).

Belongs to the peptidase C2 family.

It is found in the nucleus. Its function is as follows. Calcium-regulated non-lysosomal thiol-protease. The chain is Calpain-7 (CAPN7) from Sus scrofa (Pig).